Here is a 379-residue protein sequence, read N- to C-terminus: Succinyl-diaminopimelate desuccinylase (379 aa).

Histidine 68 contacts Zn(2+). Aspartate 70 is a catalytic residue. Aspartate 101 provides a ligand contact to Zn(2+). The active-site Proton acceptor is glutamate 135. 3 residues coordinate Zn(2+): glutamate 136, glutamate 164, and histidine 350.

It belongs to the peptidase M20A family. DapE subfamily. As to quaternary structure, homodimer. Zn(2+) serves as cofactor. Co(2+) is required as a cofactor.

The enzyme catalyses N-succinyl-(2S,6S)-2,6-diaminopimelate + H2O = (2S,6S)-2,6-diaminopimelate + succinate. The protein operates within amino-acid biosynthesis; L-lysine biosynthesis via DAP pathway; LL-2,6-diaminopimelate from (S)-tetrahydrodipicolinate (succinylase route): step 3/3. Its function is as follows. Catalyzes the hydrolysis of N-succinyl-L,L-diaminopimelic acid (SDAP), forming succinate and LL-2,6-diaminopimelate (DAP), an intermediate involved in the bacterial biosynthesis of lysine and meso-diaminopimelic acid, an essential component of bacterial cell walls. This Bordetella pertussis (strain Tohama I / ATCC BAA-589 / NCTC 13251) protein is Succinyl-diaminopimelate desuccinylase.